A 382-amino-acid polypeptide reads, in one-letter code: Succinate--CoA ligase [ADP-forming] subunit beta (382 aa).

Residues 9-237 enclose the ATP-grasp domain; the sequence is KQVFADAGIP…AAEGDELEQK (229 aa). Residues K45, 52 to 54, E91, V94, and E99 contribute to the ATP site; that span reads GRG. Mg(2+) is bound by residues N191 and D205. Substrate is bound by residues N257 and 314–316; that span reads GIT.

Belongs to the succinate/malate CoA ligase beta subunit family. In terms of assembly, heterotetramer of two alpha and two beta subunits. Mg(2+) serves as cofactor.

It catalyses the reaction succinate + ATP + CoA = succinyl-CoA + ADP + phosphate. The enzyme catalyses GTP + succinate + CoA = succinyl-CoA + GDP + phosphate. Its pathway is carbohydrate metabolism; tricarboxylic acid cycle; succinate from succinyl-CoA (ligase route): step 1/1. In terms of biological role, succinyl-CoA synthetase functions in the citric acid cycle (TCA), coupling the hydrolysis of succinyl-CoA to the synthesis of either ATP or GTP and thus represents the only step of substrate-level phosphorylation in the TCA. The beta subunit provides nucleotide specificity of the enzyme and binds the substrate succinate, while the binding sites for coenzyme A and phosphate are found in the alpha subunit. This is Succinate--CoA ligase [ADP-forming] subunit beta from Haloarcula marismortui (strain ATCC 43049 / DSM 3752 / JCM 8966 / VKM B-1809) (Halobacterium marismortui).